The sequence spans 570 residues: Sulfite reductase [NADPH] hemoprotein beta-component (570 aa).

[4Fe-4S] cluster-binding residues include C434, C440, C479, and C483. C483 provides a ligand contact to siroheme.

Belongs to the nitrite and sulfite reductase 4Fe-4S domain family. In terms of assembly, alpha(8)-beta(8). The alpha component is a flavoprotein, the beta component is a hemoprotein. Siroheme is required as a cofactor. It depends on [4Fe-4S] cluster as a cofactor.

It carries out the reaction hydrogen sulfide + 3 NADP(+) + 3 H2O = sulfite + 3 NADPH + 4 H(+). The protein operates within sulfur metabolism; hydrogen sulfide biosynthesis; hydrogen sulfide from sulfite (NADPH route): step 1/1. In terms of biological role, component of the sulfite reductase complex that catalyzes the 6-electron reduction of sulfite to sulfide. This is one of several activities required for the biosynthesis of L-cysteine from sulfate. The sequence is that of Sulfite reductase [NADPH] hemoprotein beta-component from Shigella sonnei (strain Ss046).